The chain runs to 257 residues: Ribonuclease PH (257 aa).

Residues Arg-88 and 126 to 128 (GTR) contribute to the phosphate site.

Belongs to the RNase PH family. As to quaternary structure, homohexameric ring arranged as a trimer of dimers.

It catalyses the reaction tRNA(n+1) + phosphate = tRNA(n) + a ribonucleoside 5'-diphosphate. Its function is as follows. Phosphorolytic 3'-5' exoribonuclease that plays an important role in tRNA 3'-end maturation. Removes nucleotide residues following the 3'-CCA terminus of tRNAs; can also add nucleotides to the ends of RNA molecules by using nucleoside diphosphates as substrates, but this may not be physiologically important. Probably plays a role in initiation of 16S rRNA degradation (leading to ribosome degradation) during starvation. The polypeptide is Ribonuclease PH (Nocardia farcinica (strain IFM 10152)).